Consider the following 179-residue polypeptide: Orotate phosphoribosyltransferase (179 aa).

Residues arginine 24, arginine 89, lysine 90, lysine 93, and 115–123 (EDVITTGGA) each bind 5-phospho-alpha-D-ribose 1-diphosphate. 2 residues coordinate orotate: threonine 119 and arginine 147.

It belongs to the purine/pyrimidine phosphoribosyltransferase family. PyrE subfamily. As to quaternary structure, homodimer. Mg(2+) serves as cofactor.

It carries out the reaction orotidine 5'-phosphate + diphosphate = orotate + 5-phospho-alpha-D-ribose 1-diphosphate. Its pathway is pyrimidine metabolism; UMP biosynthesis via de novo pathway; UMP from orotate: step 1/2. Its function is as follows. Catalyzes the transfer of a ribosyl phosphate group from 5-phosphoribose 1-diphosphate to orotate, leading to the formation of orotidine monophosphate (OMP). This chain is Orotate phosphoribosyltransferase, found in Nocardioides sp. (strain ATCC BAA-499 / JS614).